The sequence spans 221 residues: MCFILPRMGAGVFVSDNRLQFSRSLAEVLRNQGCRVCLSAHEAARGDVPVRDGLVYWNRASPFSLRGILLQIENLGIVLETAVFVFDAQSYVDLYPGDDFSSIDRISVDLIVANMALVHMLTAHFVSQARGKLLFVHRETSAHCASAMVSVASAAFVRMAEECVLGLARKDAPRMQTLLIRLDGVDDDSYTQWIATQLASPVLSRGPGRWVRAGQRSFFGK.

This is an uncharacterized protein from Treponema pallidum (strain Nichols).